Consider the following 223-residue polypeptide: UPF0502 protein Sde_2426 (223 aa).

This sequence belongs to the UPF0502 family.

This chain is UPF0502 protein Sde_2426, found in Saccharophagus degradans (strain 2-40 / ATCC 43961 / DSM 17024).